Reading from the N-terminus, the 152-residue chain is Large ribosomal subunit protein bL9 (152 aa).

Belongs to the bacterial ribosomal protein bL9 family.

Its function is as follows. Binds to the 23S rRNA. The protein is Large ribosomal subunit protein bL9 of Nostoc punctiforme (strain ATCC 29133 / PCC 73102).